Here is a 1265-residue protein sequence, read N- to C-terminus: Protein transport protein SEC31 (1265 aa).

7 WD repeats span residues 6–46 (EIAR…ELWD), 61–105 (TVDN…KTKD), 116–156 (KHTG…EPFA), 162–202 (TPMD…EVLH), 209–252 (GGRA…APEK), 256–296 (GHKK…KLGE), and 299–339 (TTAN…PSVS). The WD 8; interaction with SEC13 repeat unit spans residues 380–403 (SFGFGSKLVIINTDSSGKSTVKVD). Over residues 457–480 (KESLFEDANNDEKEATSPETKKEN) the composition is skewed to basic and acidic residues. 3 disordered regions span residues 457 to 485 (KESL…EDDF), 765 to 784 (VKSS…GQTR), and 793 to 1163 (PAYA…IPEN). Positions 794 to 810 (AYAPPVQAPPVQAPQPP) are enriched in pro residues. 5 stretches are compositionally biased toward low complexity: residues 811–824 (LVQQ…QQQP), 865–875 (TPSSLSGTTSG), 901–931 (AKTA…FGSP), 939–951 (SQPG…SSAG), and 969–987 (SISR…TVPA). The span at 1004 to 1023 (SDASQPPSSGFASPTLNSSP) shows a compositional bias: polar residues. 2 stretches are compositionally biased toward pro residues: residues 1062-1071 (YAPPKNPYAV) and 1083-1101 (APPP…PPQP).

Belongs to the WD repeat SEC31 family. The COPII coat is composed of at least 5 proteins: the SEC23/24 complex, the SEC13/31 complex, and the protein SAR1. SEC13 and SEC31 make a 2:2 tetramer that forms the edge element of the COPII outer coat. The tetramer self-assembles in multiple copies to form the complete polyhedral cage. Interacts (via WD 8) with SEC13.

The protein localises to the cytoplasmic vesicle. The protein resides in the COPII-coated vesicle membrane. Its subcellular location is the endoplasmic reticulum membrane. In terms of biological role, component of the coat protein complex II (COPII) which promotes the formation of transport vesicles from the endoplasmic reticulum (ER). The coat has two main functions, the physical deformation of the endoplasmic reticulum membrane into vesicles and the selection of cargo molecules. The sequence is that of Protein transport protein SEC31 (PGA63) from Candida albicans (strain SC5314 / ATCC MYA-2876) (Yeast).